Here is a 187-residue protein sequence, read N- to C-terminus: Probable cobalt-precorrin-6B C(15)-methyltransferase (decarboxylating) (187 aa).

Residues Thr-15, 39–43, Glu-60, and Ala-89 each bind S-adenosyl-L-methionine; that span reads GSCTG.

It belongs to the methyltransferase superfamily. Archaeal-type CbiT family.

The enzyme catalyses Co-precorrin-6B + S-adenosyl-L-methionine = Co-precorrin-7 + S-adenosyl-L-homocysteine + CO2. It participates in cofactor biosynthesis; adenosylcobalamin biosynthesis; cob(II)yrinate a,c-diamide from sirohydrochlorin (anaerobic route): step 8/10. Functionally, catalyzes the methylation of C-15 in cobalt-precorrin-6B followed by the decarboxylation of C-12 to form cobalt-precorrin-7. The sequence is that of Probable cobalt-precorrin-6B C(15)-methyltransferase (decarboxylating) from Halobacterium salinarum (strain ATCC 700922 / JCM 11081 / NRC-1) (Halobacterium halobium).